The primary structure comprises 416 residues: Gamma-glutamyl phosphate reductase (416 aa).

Belongs to the gamma-glutamyl phosphate reductase family.

Its subcellular location is the cytoplasm. The enzyme catalyses L-glutamate 5-semialdehyde + phosphate + NADP(+) = L-glutamyl 5-phosphate + NADPH + H(+). It participates in amino-acid biosynthesis; L-proline biosynthesis; L-glutamate 5-semialdehyde from L-glutamate: step 2/2. Functionally, catalyzes the NADPH-dependent reduction of L-glutamate 5-phosphate into L-glutamate 5-semialdehyde and phosphate. The product spontaneously undergoes cyclization to form 1-pyrroline-5-carboxylate. This is Gamma-glutamyl phosphate reductase from Salmonella agona (strain SL483).